We begin with the raw amino-acid sequence, 211 residues long: Regulator of G-protein signaling 2 (211 aa).

2 disordered regions span residues 14–33 and 49–71; these read GPMDKGAGTGPKNEEKREKM and LQNSSSPGKPKTGKKSKQQTFIK. The necessary for membrane association stretch occupies residues 32-66; the sequence is KMKRTLLKDWKSRLSYFLQNSSSPGKPKTGKKSKQ. Residues 79-116 form a necessary to inhibit protein synthesis region; that stretch reads LWSEAFDELLASKYGLAAFRAFLKSEFCEENIEFWLAC. In terms of domain architecture, RGS spans 83 to 199; the sequence is AFDELLASKY…LESEFYQDLC (117 aa).

Interacts with GNAQ. Does not interact with GNAI1 and GNAI3. Interacts with EIF2B5. Interacts with PRKG1 (isoform alpha). Post-translationally, phosphorylated by protein kinase C. Phosphorylation by PRKG1 leads to activation of RGS2 activity.

The protein resides in the cell membrane. The protein localises to the cytoplasm. Its subcellular location is the nucleus. It is found in the nucleolus. In terms of biological role, regulates G protein-coupled receptor signaling cascades. Inhibits signal transduction by increasing the GTPase activity of G protein alpha subunits, thereby driving them into their inactive GDP-bound form. It is involved in the negative regulation of the angiotensin-activated signaling pathway. Plays a role in the regulation of blood pressure in response to signaling via G protein-coupled receptors and GNAQ. Plays a role in regulating the constriction and relaxation of vascular smooth muscle. Binds EIF2B5 and blocks its activity, thereby inhibiting the translation of mRNA into protein. In Bos taurus (Bovine), this protein is Regulator of G-protein signaling 2 (RGS2).